Reading from the N-terminus, the 99-residue chain is Integration host factor subunit alpha (99 aa).

Positions 52–73 (FGNFTLRDKPQRPGRNPKTGEE) are disordered.

The protein belongs to the bacterial histone-like protein family. In terms of assembly, heterodimer of an alpha and a beta chain.

Its function is as follows. This protein is one of the two subunits of integration host factor, a specific DNA-binding protein that functions in genetic recombination as well as in transcriptional and translational control. This is Integration host factor subunit alpha from Legionella pneumophila subsp. pneumophila (strain Philadelphia 1 / ATCC 33152 / DSM 7513).